Here is a 235-residue protein sequence, read N- to C-terminus: MNDKVFTKAIKKQFEFDEEVAAVFDDMLQRSVPFYKESQKISEFFAQKALQNGGIAYDLGCSTATLLINISRKLQNKATLIGLDNSEAMLQRARKKCEAFKADIELENADILEYDYREANLFISNYTLQFVRPLIREELVKKIASSLKKDGLFIFSEKVISHHSKLHKDLIECYYDFKKEQGYSEYEIVQKREALENVLIPYSEEENIKMAKNCGFSHCEVVFRWANFATFIAIK.

Residues tyrosine 35, 60-62, 84-85, 110-111, asparagine 125, and arginine 192 each bind S-adenosyl-L-methionine; these read GCS, DN, and DI.

The protein belongs to the class I-like SAM-binding methyltransferase superfamily. Cx-SAM synthase family. In terms of assembly, homodimer.

It catalyses the reaction prephenate + S-adenosyl-L-methionine = carboxy-S-adenosyl-L-methionine + 3-phenylpyruvate + H2O. Functionally, catalyzes the conversion of S-adenosyl-L-methionine (SAM) to carboxy-S-adenosyl-L-methionine (Cx-SAM). This is Carboxy-S-adenosyl-L-methionine synthase from Sulfurimonas denitrificans (strain ATCC 33889 / DSM 1251) (Thiomicrospira denitrificans (strain ATCC 33889 / DSM 1251)).